Here is a 372-residue protein sequence, read N- to C-terminus: Riboflavin biosynthesis protein RibD (372 aa).

The CMP/dCMP-type deaminase domain occupies 1-122 (MKDIFYMKKA…KWLKKHGILV (122 aa)). The segment at 1–145 (MKDIFYMKKA…KGFFQRMTTG (145 aa)) is deaminase. Position 50 (H50) interacts with Zn(2+). The active-site Proton donor is E52. Zn(2+) contacts are provided by C75 and C84. The segment at 146-372 (IPWIKLKLAS…KLILTKHNSS (227 aa)) is reductase. An NADP(+)-binding site is contributed by A154. S168 is a substrate binding site. Position 170 (W170) interacts with NADP(+). R184 is a substrate binding site. 2 residues coordinate NADP(+): T196 and D200. The substrate site is built by L204 and R207. Residue S236 participates in NADP(+) binding. E301 contributes to the substrate binding site. 303–309 (GPSLSSS) provides a ligand contact to NADP(+).

It in the N-terminal section; belongs to the cytidine and deoxycytidylate deaminase family. The protein in the C-terminal section; belongs to the HTP reductase family. Requires Zn(2+) as cofactor.

It carries out the reaction 2,5-diamino-6-hydroxy-4-(5-phosphoribosylamino)-pyrimidine + H2O + H(+) = 5-amino-6-(5-phospho-D-ribosylamino)uracil + NH4(+). The enzyme catalyses 5-amino-6-(5-phospho-D-ribitylamino)uracil + NADP(+) = 5-amino-6-(5-phospho-D-ribosylamino)uracil + NADPH + H(+). The protein operates within cofactor biosynthesis; riboflavin biosynthesis; 5-amino-6-(D-ribitylamino)uracil from GTP: step 2/4. Its pathway is cofactor biosynthesis; riboflavin biosynthesis; 5-amino-6-(D-ribitylamino)uracil from GTP: step 3/4. Converts 2,5-diamino-6-(ribosylamino)-4(3h)-pyrimidinone 5'-phosphate into 5-amino-6-(ribosylamino)-2,4(1h,3h)-pyrimidinedione 5'-phosphate. The chain is Riboflavin biosynthesis protein RibD (ribD) from Buchnera aphidicola subsp. Baizongia pistaciae (strain Bp).